We begin with the raw amino-acid sequence, 513 residues long: Keratin, type II cuticular Hb2 (513 aa).

Residues 1-120 (MSYHSFQPGS…PTVQRVKRDE (120 aa)) are head. In terms of domain architecture, IF rod spans 120-431 (EKEQIKCLNN…RLLEGEEHRL (312 aa)). Residues 121–155 (KEQIKCLNNRFASFINKVRFLEQKNKLLETKWNFM) form a coil 1A region. Residues 156–165 (QQQRCCQTNI) are linker 1. The interval 166–266 (EPIFEGYISA…YEEEICLLQS (101 aa)) is coil 1B. A linker 12 region spans residues 267–283 (QISETSVIVKMDNSREL). The segment at 284–427 (DVDGIIAEIK…ATYRRLLEGE (144 aa)) is coil 2. The tail stretch occupies residues 428 to 513 (EHRLCEGIGP…AGGSSPSHKH (86 aa)).

This sequence belongs to the intermediate filament family. In terms of assembly, heterotetramer of two type I and two type II keratins.

This is Keratin, type II cuticular Hb2 (KRT82) from Homo sapiens (Human).